A 280-amino-acid chain; its full sequence is Pantothenate synthetase (280 aa).

Position 26–33 (26–33 (MGNLHDGH)) interacts with ATP. The active-site Proton donor is H33. Residue Q57 coordinates (R)-pantoate. A beta-alanine-binding site is contributed by Q57. 147–150 (GKKD) contributes to the ATP binding site. Q153 contributes to the (R)-pantoate binding site. 184-187 (LSSR) contributes to the ATP binding site.

Belongs to the pantothenate synthetase family. As to quaternary structure, homodimer.

It is found in the cytoplasm. It catalyses the reaction (R)-pantoate + beta-alanine + ATP = (R)-pantothenate + AMP + diphosphate + H(+). The protein operates within cofactor biosynthesis; (R)-pantothenate biosynthesis; (R)-pantothenate from (R)-pantoate and beta-alanine: step 1/1. Catalyzes the condensation of pantoate with beta-alanine in an ATP-dependent reaction via a pantoyl-adenylate intermediate. In Verminephrobacter eiseniae (strain EF01-2), this protein is Pantothenate synthetase.